The primary structure comprises 430 residues: Endochitinase 46 (430 aa).

The first 22 residues, 1–22 (MLSFLGKSVALLAALQATLSSA), serve as a signal peptide directing secretion. Residues 23 to 35 (SPLATEERSIEKR) constitute a propeptide that is removed on maturation. In terms of domain architecture, GH18 spans 39–408 (YANSVYFTNW…GTSHRALGGL (370 aa)). Chitin is bound by residues 103–104 (GT) and 130–133 (GGWT). Catalysis depends on Glu172, which acts as the Proton donor. Tyr173 serves as a coordination point for chitin. Asn219 carries an N-linked (GlcNAc...) asparagine glycan. Residues 238–241 (MAYD) and Trp385 contribute to the chitin site.

It belongs to the glycosyl hydrolase 18 family. Chitinase class V subfamily.

It is found in the secreted. The enzyme catalyses Random endo-hydrolysis of N-acetyl-beta-D-glucosaminide (1-&gt;4)-beta-linkages in chitin and chitodextrins.. Functionally, secreted chitinase involved in the degradation of chitin, a component of the cell walls of fungi and exoskeletal elements of some animals (including worms and arthropods). Plays a morphogenetic role during apical growth, cell division and differentiation (cell wall morphogenesis). Also acts as an antifungal agent. Involved in the degradation and further assimilation of phytopathogenic fungi, namely mycoparasitism, the major mechanism accounting for the antagonistic activity against phytopathogenic fungi displayed by Trichoderma. The protein is Endochitinase 46 (chit46) of Trichoderma harzianum (Hypocrea lixii).